A 429-amino-acid polypeptide reads, in one-letter code: UDP-N-acetylglucosamine 1-carboxyvinyltransferase (429 aa).

A phosphoenolpyruvate-binding site is contributed by 22–23; the sequence is KN. A UDP-N-acetyl-alpha-D-glucosamine-binding site is contributed by Arg102. Catalysis depends on Cys126, which acts as the Proton donor. Cys126 bears the 2-(S-cysteinyl)pyruvic acid O-phosphothioketal mark. UDP-N-acetyl-alpha-D-glucosamine-binding positions include 131–135, Asp316, and Ile338; that span reads RPVDL.

The protein belongs to the EPSP synthase family. MurA subfamily.

It is found in the cytoplasm. It catalyses the reaction phosphoenolpyruvate + UDP-N-acetyl-alpha-D-glucosamine = UDP-N-acetyl-3-O-(1-carboxyvinyl)-alpha-D-glucosamine + phosphate. The protein operates within cell wall biogenesis; peptidoglycan biosynthesis. Its function is as follows. Cell wall formation. Adds enolpyruvyl to UDP-N-acetylglucosamine. The protein is UDP-N-acetylglucosamine 1-carboxyvinyltransferase of Nitrobacter hamburgensis (strain DSM 10229 / NCIMB 13809 / X14).